Consider the following 158-residue polypeptide: Large ribosomal subunit protein uL30 (158 aa).

This sequence belongs to the universal ribosomal protein uL30 family. In terms of assembly, part of the 50S ribosomal subunit.

This is Large ribosomal subunit protein uL30 from Saccharolobus solfataricus (strain ATCC 35092 / DSM 1617 / JCM 11322 / P2) (Sulfolobus solfataricus).